The primary structure comprises 226 residues: Protein YOP1 homolog (226 aa).

A disordered region spans residues 1–25 (MRMSKLYKNKEKENEKPSNEPPIKQ). Residues 1–72 (MRMSKLYKNK…IEFGYKLGIK (72 aa)) are Cytoplasmic-facing. Residues 8 to 18 (KNKEKENEKPS) show a composition bias toward basic and acidic residues. A helical membrane pass occupies residues 73-92 (PSYIVVFGGSALFISLVLGW). Topologically, residues 93 to 94 (GA) are lumenal. The helical transmembrane segment at 95-113 (ALICNLVGFAYPAYQSFKA) threads the bilayer. Residues 114–123 (VESQGHAETK) are Cytoplasmic-facing. Residues 124-140 (LWLTYWVVFSLFFFIEY) traverse the membrane as a helical segment. Residues 141–143 (LID) are Lumenal-facing. The helical transmembrane segment at 144-162 (IILFWIPFYYVIKLLFLLY) threads the bilayer. The Cytoplasmic segment spans residues 163 to 226 (LYMPQVRGAE…VQEGVRRRNV (64 aa)).

The protein belongs to the DP1 family. In terms of assembly, may form oligomers.

Its subcellular location is the endoplasmic reticulum membrane. Required to generate and maintain the structure of the tubular endoplasmic reticulum network and the digestive (food) vacuole. Induces high curvature in membranes and causes membrane tubule formation. This chain is Protein YOP1 homolog, found in Plasmodium berghei (strain Anka).